Here is a 329-residue protein sequence, read N- to C-terminus: Aspartate carbamoyltransferase catalytic subunit (329 aa).

Positions 63 and 64 each coordinate carbamoyl phosphate. L-aspartate is bound at residue lysine 91. Residues arginine 113, histidine 141, and glutamine 144 each contribute to the carbamoyl phosphate site. L-aspartate-binding residues include arginine 179 and arginine 234. Residues glycine 275 and proline 276 each coordinate carbamoyl phosphate.

It belongs to the aspartate/ornithine carbamoyltransferase superfamily. ATCase family. Heterododecamer (2C3:3R2) of six catalytic PyrB chains organized as two trimers (C3), and six regulatory PyrI chains organized as three dimers (R2).

It catalyses the reaction carbamoyl phosphate + L-aspartate = N-carbamoyl-L-aspartate + phosphate + H(+). It functions in the pathway pyrimidine metabolism; UMP biosynthesis via de novo pathway; (S)-dihydroorotate from bicarbonate: step 2/3. Its function is as follows. Catalyzes the condensation of carbamoyl phosphate and aspartate to form carbamoyl aspartate and inorganic phosphate, the committed step in the de novo pyrimidine nucleotide biosynthesis pathway. This Magnetococcus marinus (strain ATCC BAA-1437 / JCM 17883 / MC-1) protein is Aspartate carbamoyltransferase catalytic subunit.